Consider the following 353-residue polypeptide: Aliphatic aldoxime dehydratase (353 aa).

Ser219 contributes to the an aliphatic aldoxime binding site. Heme b is bound at residue His299. An an aliphatic aldoxime-binding site is contributed by His320. His320 is an active-site residue.

This sequence belongs to the heme-containing dehydratase family. Homodimer. Heme b is required as a cofactor.

It catalyses the reaction an aliphatic aldoxime = a nitrile + H2O. Its activity is regulated as follows. Active when the heme iron is in the ferrous state. The activity is enhanced by reducing agents, such as Na(2)S, Na(2)S(2)(O4), 2-mercaptoethanol, and L-cysteine and supplementary additions of electron acceptors such as flavins, sulfite ion, and vitamin K3. The effect of various chemicals on the enzyme activity is different in the presence and absence of the reducing reagent, Na(2)S, which acts not only as a reductant but also changes the substrate specificity of the enzyme. Functionally, catalyzes the dehydration of aldoximes to their corresponding nitrile. Is active toward various arylalkyl- and alkyl-aldoximes, and to a lesser extent toward aryl-aldoximes. The protein is Aliphatic aldoxime dehydratase of Rhodococcus erythropolis (Arthrobacter picolinophilus).